Here is a 90-residue protein sequence, read N- to C-terminus: Small ribosomal subunit protein bS18 (90 aa).

The interval 1–24 (MKPMRQKPGRGQGNKSISNALASK) is disordered.

It belongs to the bacterial ribosomal protein bS18 family. In terms of assembly, part of the 30S ribosomal subunit. Forms a tight heterodimer with protein bS6.

Binds as a heterodimer with protein bS6 to the central domain of the 16S rRNA, where it helps stabilize the platform of the 30S subunit. This Chlorobium phaeovibrioides (strain DSM 265 / 1930) (Prosthecochloris vibrioformis (strain DSM 265)) protein is Small ribosomal subunit protein bS18.